The following is a 258-amino-acid chain: Acyl-[acyl-carrier-protein]--UDP-N-acetylglucosamine O-acyltransferase (258 aa).

It belongs to the transferase hexapeptide repeat family. LpxA subfamily. As to quaternary structure, homotrimer.

The protein localises to the cytoplasm. The catalysed reaction is a (3R)-hydroxyacyl-[ACP] + UDP-N-acetyl-alpha-D-glucosamine = a UDP-3-O-[(3R)-3-hydroxyacyl]-N-acetyl-alpha-D-glucosamine + holo-[ACP]. The protein operates within glycolipid biosynthesis; lipid IV(A) biosynthesis; lipid IV(A) from (3R)-3-hydroxytetradecanoyl-[acyl-carrier-protein] and UDP-N-acetyl-alpha-D-glucosamine: step 1/6. Involved in the biosynthesis of lipid A, a phosphorylated glycolipid that anchors the lipopolysaccharide to the outer membrane of the cell. In Saccharophagus degradans (strain 2-40 / ATCC 43961 / DSM 17024), this protein is Acyl-[acyl-carrier-protein]--UDP-N-acetylglucosamine O-acyltransferase.